We begin with the raw amino-acid sequence, 311 residues long: Small ribosomal subunit biogenesis GTPase RsgA (311 aa).

The CP-type G domain occupies L77–F239. Residues N126–D129 and G180–T188 contribute to the GTP site. Zn(2+)-binding residues include C263, C268, H270, and C276.

It belongs to the TRAFAC class YlqF/YawG GTPase family. RsgA subfamily. In terms of assembly, monomer. Associates with 30S ribosomal subunit, binds 16S rRNA. Zn(2+) is required as a cofactor.

Its subcellular location is the cytoplasm. Functionally, one of several proteins that assist in the late maturation steps of the functional core of the 30S ribosomal subunit. Helps release RbfA from mature subunits. May play a role in the assembly of ribosomal proteins into the subunit. Circularly permuted GTPase that catalyzes slow GTP hydrolysis, GTPase activity is stimulated by the 30S ribosomal subunit. In Azobacteroides pseudotrichonymphae genomovar. CFP2, this protein is Small ribosomal subunit biogenesis GTPase RsgA.